We begin with the raw amino-acid sequence, 378 residues long: Deoxyhypusine synthase (378 aa).

Residues 107–111 (SNLIS), 133–135 (SAG), Glu-139, and Asp-253 contribute to the NAD(+) site. 138-139 (EE) contributes to the spermidine binding site. Asp-258 is a spermidine binding site. An NAD(+)-binding site is contributed by Gly-300. His-305 provides a ligand contact to spermidine. Position 325-326 (325-326 (TG)) interacts with NAD(+). Residues 331–333 (GSD) and 340–346 (EAISWGK) each bind spermidine. Catalysis depends on Lys-346, which acts as the Nucleophile. Residue 359–360 (DA) participates in NAD(+) binding.

It belongs to the deoxyhypusine synthase family. NAD(+) is required as a cofactor.

The enzyme catalyses [eIF5A protein]-L-lysine + spermidine = [eIF5A protein]-deoxyhypusine + propane-1,3-diamine. The protein operates within protein modification; eIF5A hypusination. Catalyzes the NAD-dependent oxidative cleavage of spermidine and the subsequent transfer of the butylamine moiety of spermidine to the epsilon-amino group of a specific lysine residue of the eIF-5A precursor protein to form the intermediate deoxyhypusine residue. The sequence is that of Deoxyhypusine synthase (DYS1) from Debaryomyces hansenii (strain ATCC 36239 / CBS 767 / BCRC 21394 / JCM 1990 / NBRC 0083 / IGC 2968) (Yeast).